The primary structure comprises 1838 residues: Type III effector DspE (1838 aa).

Over residues 1–12 (MELKSLGTEHKA) the composition is skewed to basic and acidic residues. 6 disordered regions span residues 1–72 (MELK…AAHQ), 86–163 (KKFS…PTQQ), 182–264 (MAHP…VATP), 281–300 (LEGT…LKGS), 398–418 (DGKS…KTML), and 1480–1505 (NLAA…SNNR). Residues 27-46 (ALQQGSSSSSPQNAAASLAA) show a composition bias toward low complexity. The span at 91–103 (SAPQGQPGTTHSK) shows a compositional bias: polar residues. Positions 110-120 (LLARDDGETQH) are enriched in basic and acidic residues. Positions 407-418 (GSGTQSHNKTML) are enriched in polar residues. A compositionally biased stretch (low complexity) spans 1480–1502 (NLAAGSRERSTTSGQFGSTTSAS).

Belongs to the AvrE family. In terms of assembly, interacts with the chaperone DspF (DspB/F).

It is found in the secreted. The protein resides in the host cell. With respect to regulation, polyamidoamine dendrimers inhibit channel and virulence activities. In terms of biological role, major virulence factor that may function as a water- and solute-permeable channel dedicated to creating osmotic/water potential perturbation and a water- and nutrient-rich apoplast in which bacteria multiply within the infected plant tissues. Expression in Xenopus oocytes results in inward and outward currents, permeability to water and osmolarity-dependent oocyte swelling and bursting. Acts as a major cell-death inducer during fire blight, a necrotic disease affecting plants of the rosaceous family, and during hypersensitive response (HR) on non-host plants. Essential for pathogenicity on host plants. Contributes quantitatively and in a strain-dependent fashion to HR elicitation in non-host plants such as tobacco. Induces cell death in leaves of apple, a host plant, and tobacco, a non-host plant. Also triggers necrosis in the widely used model, non-host, N.benthamiana and in yeast. Required for the transient multiplication and survival of E.amylovora in non-host A.thaliana leaves. In A.thaliana, triggers electrolyte leakage, activation of defense pathways, reactive oxygen species (ROS) accumulation and cell death. The toxicity of DspE in A.thaliana is associated with an early repression of de novo protein synthesis. In Erwinia amylovora (Fire blight bacteria), this protein is Type III effector DspE.